The sequence spans 96 residues: Xylulose kinase (96 aa).

Substrate is bound at residue 71–72 (QH).

It belongs to the FGGY kinase family.

It catalyses the reaction D-xylulose + ATP = D-xylulose 5-phosphate + ADP + H(+). Catalyzes the phosphorylation of D-xylulose to D-xylulose 5-phosphate. The polypeptide is Xylulose kinase (Arthrobacter sp. (strain NRRL B3728)).